A 335-amino-acid polypeptide reads, in one-letter code: Nuclear envelope-associated protein 2 (335 aa).

Coiled coils occupy residues 55–85 and 125–260; these read RKEA…ELVA and CSVL…LKKK. A Bipartite nuclear localization signal motif is present at residues 239 to 260; it reads KTKELESQLERQRRADQELKKK. The chain crosses the membrane as a helical span at residues 312-329; sequence FWDTSGFKIVVSMSMLIL.

In terms of assembly, forms homomers and heteromers with NEAP1 and NEAP3. Interacts with SUN1 and SUN2.

The protein resides in the nucleus inner membrane. It localises to the nucleus. The protein localises to the nucleoplasm. The protein is Nuclear envelope-associated protein 2 of Arabidopsis thaliana (Mouse-ear cress).